Consider the following 175-residue polypeptide: ATP synthase subunit b 2 (175 aa).

The chain crosses the membrane as a helical span at residues 20–40 (LIFWTAVTFVIVLLILKKFAW).

It belongs to the ATPase B chain family. As to quaternary structure, F-type ATPases have 2 components, F(1) - the catalytic core - and F(0) - the membrane proton channel. F(1) has five subunits: alpha(3), beta(3), gamma(1), delta(1), epsilon(1). F(0) has four main subunits: a(1), b(2) and c(10-14). The alpha and beta chains form an alternating ring which encloses part of the gamma chain. F(1) is attached to F(0) by a central stalk formed by the gamma and epsilon chains, while a peripheral stalk is formed by the delta and b chains.

Its subcellular location is the cell inner membrane. Its function is as follows. F(1)F(0) ATP synthase produces ATP from ADP in the presence of a proton or sodium gradient. F-type ATPases consist of two structural domains, F(1) containing the extramembraneous catalytic core and F(0) containing the membrane proton channel, linked together by a central stalk and a peripheral stalk. During catalysis, ATP synthesis in the catalytic domain of F(1) is coupled via a rotary mechanism of the central stalk subunits to proton translocation. Functionally, component of the F(0) channel, it forms part of the peripheral stalk, linking F(1) to F(0). This chain is ATP synthase subunit b 2, found in Prosthecochloris aestuarii (strain DSM 271 / SK 413).